We begin with the raw amino-acid sequence, 180 residues long: Minor allergen Can f 2 (180 aa).

An N-terminal signal peptide occupies residues 1 to 18 (MQLLLLTVGLALICGLQA). Asparagine 45 is a glycosylation site (N-linked (GlcNAc...) asparagine). A disulfide bridge connects residues cysteine 82 and cysteine 175.

It belongs to the calycin superfamily. Lipocalin family. As to expression, tongue epithelial tissue and parotid gland.

It localises to the secreted. The polypeptide is Minor allergen Can f 2 (Canis lupus familiaris (Dog)).